The chain runs to 70 residues: Adenylate kinase (70 aa).

An ATP-binding site is contributed by 10–15; it reads GAGKGT. Residues 30–59 form an NMP region; it reads STGDLFRANISKQTELGKLAKSYMDKGELV. Residues threonine 31, arginine 36, and 57–59 contribute to the AMP site; that span reads ELV.

Belongs to the adenylate kinase family. Monomer.

It is found in the cytoplasm. The enzyme catalyses AMP + ATP = 2 ADP. The protein operates within purine metabolism; AMP biosynthesis via salvage pathway; AMP from ADP: step 1/1. Functionally, catalyzes the reversible transfer of the terminal phosphate group between ATP and AMP. Plays an important role in cellular energy homeostasis and in adenine nucleotide metabolism. The protein is Adenylate kinase (adk) of Streptomyces scabiei.